Here is a 519-residue protein sequence, read N- to C-terminus: Cytochrome P450 72C1 (519 aa).

A helical membrane pass occupies residues 10–30; sequence VFLIGFLILILNWVWRAVNWV. Cys467 contributes to the heme binding site.

The protein belongs to the cytochrome P450 family. Heme serves as cofactor. In terms of tissue distribution, expressed in hypocotyls, roots, cotyledons, stamens and silique junctions.

It localises to the membrane. In terms of biological role, atypical cytochrome P450 involved in brassinosteroids (BRs) inactivation and regulation of BRs homeostasis. Does not possess carbon 26 hydroxylase activity and may inactivate BRs by hydroxylation of carbons other than C-26. Acts in association with CYP734A1 to inactivate BRs and modulate photomorphogenesis. The polypeptide is Cytochrome P450 72C1 (CYP72C1) (Arabidopsis thaliana (Mouse-ear cress)).